A 135-amino-acid chain; its full sequence is Ribosome-binding factor A (135 aa).

It belongs to the RbfA family. In terms of assembly, monomer. Binds 30S ribosomal subunits, but not 50S ribosomal subunits or 70S ribosomes.

The protein resides in the cytoplasm. Functionally, one of several proteins that assist in the late maturation steps of the functional core of the 30S ribosomal subunit. Associates with free 30S ribosomal subunits (but not with 30S subunits that are part of 70S ribosomes or polysomes). Required for efficient processing of 16S rRNA. May interact with the 5'-terminal helix region of 16S rRNA. In Rhizobium meliloti (strain 1021) (Ensifer meliloti), this protein is Ribosome-binding factor A.